Consider the following 476-residue polypeptide: Surface membrane glycoprotein GP46/M-2 (476 aa).

A signal peptide spans 1-32 (MAQCVRRLVLAAPLAAVVALLLCTSSAPVARA). 4 consecutive repeat copies span residues 107–130 (VMIL…PSWS), 131–154 (SMKH…PEWS), 155–178 (EMTS…TSWS), and 179–202 (SMPK…DSWR). A 4 X 24 AA tandem repeats region spans residues 107 to 202 (VMILALDFGA…FCGCVPDSWR (96 aa)). Disordered stretches follow at residues 231 to 255 (APGT…PSPG) and 348 to 370 (ALSP…RRRA). Cysteine 452 is lipidated: GPI-anchor amidated cysteine. A propeptide spans 453 to 476 (PALFDGARLRCCALVVCAGAAPAG) (removed in mature form).

Its subcellular location is the cell membrane. The polypeptide is Surface membrane glycoprotein GP46/M-2 (Leishmania amazonensis).